Reading from the N-terminus, the 177-residue chain is ATP synthase subunit delta (177 aa).

It belongs to the ATPase delta chain family. As to quaternary structure, F-type ATPases have 2 components, F(1) - the catalytic core - and F(0) - the membrane proton channel. F(1) has five subunits: alpha(3), beta(3), gamma(1), delta(1), epsilon(1). F(0) has three main subunits: a(1), b(2) and c(10-14). The alpha and beta chains form an alternating ring which encloses part of the gamma chain. F(1) is attached to F(0) by a central stalk formed by the gamma and epsilon chains, while a peripheral stalk is formed by the delta and b chains.

It is found in the cell inner membrane. Its function is as follows. F(1)F(0) ATP synthase produces ATP from ADP in the presence of a proton or sodium gradient. F-type ATPases consist of two structural domains, F(1) containing the extramembraneous catalytic core and F(0) containing the membrane proton channel, linked together by a central stalk and a peripheral stalk. During catalysis, ATP synthesis in the catalytic domain of F(1) is coupled via a rotary mechanism of the central stalk subunits to proton translocation. This protein is part of the stalk that links CF(0) to CF(1). It either transmits conformational changes from CF(0) to CF(1) or is implicated in proton conduction. The polypeptide is ATP synthase subunit delta (Actinobacillus pleuropneumoniae serotype 7 (strain AP76)).